The chain runs to 5073 residues: Malformin synthetase mlfA (5073 aa).

An adenylation 1 region spans residues 194 to 585 (ERHATNRPHS…CGRADTQVKL (392 aa)). One can recognise a Carrier 1 domain in the interval 726-799 (SRLEQEVQLA…EAASLAEVQE (74 aa)). An O-(pantetheine 4'-phosphoryl)serine modification is found at Ser760. The interval 837–1268 (EDVFPCTTMQ…ALNTLSLLQA (432 aa)) is condensation 1. The adenylation 2 stretch occupies residues 1296–1685 (DRWVTRHPEG…GRKDTQVKLR (390 aa)). A Carrier 2 domain is found at 1823 to 1900 (TPASELERTL…QLAAEVGEPA (78 aa)). An O-(pantetheine 4'-phosphoryl)serine modification is found at Ser1860. 2 disordered regions span residues 1901-1930 (GQSA…DGVD) and 1963-1984 (GGSS…SSSK). Low complexity-rich tracts occupy residues 1903–1927 (SASS…STND) and 1965–1982 (SSSN…SSSS). A condensation 2 region spans residues 2031-2446 (EDIYPATALQ…AVSCSDTETL (416 aa)). Positions 2469-2861 (SRTPHAPAVC…IGRRDGQLKL (393 aa)) are adenylation 3. In terms of domain architecture, Carrier 3 spans 2997–3073 (RPKTSQEQEM…QLICHLNSIR (77 aa)). Position 3034 is an O-(pantetheine 4'-phosphoryl)serine (Ser3034). Condensation regions lie at residues 3090-3555 (WVAL…TYDQ) and 3576-3995 (DIYP…EQLV). The interval 4020–4410 (HASRQAVCAW…VGRKDNQIKF (391 aa)) is adenylation 4. In terms of domain architecture, Carrier 4 spans 4544–4620 (MPSTAAERKM…DLGDQARSPN (77 aa)). An O-(pantetheine 4'-phosphoryl)serine modification is found at Ser4581. The segment at 4611 to 4633 (DLGDQARSPNADNQRVSTASSAG) is disordered. Residues 4617 to 4631 (RSPNADNQRVSTASS) show a composition bias toward polar residues. The tract at residues 4657-4991 (DVLPTTSFQR…LQTIVQHQNN (335 aa)) is condensation 5.

The protein belongs to the NRP synthetase family.

It participates in secondary metabolite biosynthesis. Functionally, nonribosomal peptide synthetase; part of the gene cluster that mediates the biosynthesis of malformins, cyclic pentapeptides with a disulfide bond between 2 consecutive cysteins, that show potential anti-tumor as well as antimalarial and antitrypanosomal properties. The nonribosomal peptide synthetase mlfA is responsible of the formation of the cyclic pentapeptide. The malformin biosynthesis clusters in malformin-producing fungi also contain enzymes involved in the formation of the disulfide bond between the two consecutive cysteins within malformins, in addition to additional tailoring enzymes such as methyltransferases or oxidoreductases. They are also composed of up to 4 major facilitator superfamily transporters, and transcription factors probably involved in the regulation of the expression of those clusters. The sequence is that of Malformin synthetase mlfA from Aspergillus tubingensis (strain CBS 134.48).